The sequence spans 213 residues: Nicolin-1 (213 aa).

Part of the neuronal tubulin polyglutamylase complex which contains TPGS1, TPGS2, TTLL1, LRRC49 and NICN1.

Its subcellular location is the nucleus. This is Nicolin-1 (NICN1) from Canis lupus familiaris (Dog).